The chain runs to 145 residues: MRADREELDLPPPVGGVAVDVVKVEVPATGRTLVLAFVKTCAVLAAVHGLYILHEVDLTTAHKEAEWEFEPLAWRVWLVVFYFGCLSLTVWLLEGSYGGSDHHAARAQSPDVRARRSELDDNIAQMGAVHGLELPRRQVLRHRGT.

It is found in the host cytoplasm. Its subcellular location is the host perinuclear region. The chain is I-leader protein from Human adenovirus C serotype 2 (HAdV-2).